The following is an 80-amino-acid chain: Adipogenin (80 aa).

The chain crosses the membrane as a helical span at residues 14-34 (FSFLVFWFCLPVGLLLLLIIW).

It belongs to the adipogenin family.

It is found in the membrane. The protein resides in the nucleus. Functionally, plays a role in stimulating adipocyte differentiation and development. This Homo sapiens (Human) protein is Adipogenin.